Consider the following 429-residue polypeptide: Melanoma-associated antigen 11 (429 aa).

2 disordered regions span residues 1–30 (METQ…GDFG) and 188–215 (IFGS…IDPE). Residues 194–209 (DEGSGSQEKEGPSTSP) show a composition bias toward polar residues. The 200-residue stretch at 222–421 (LHDKIIDLVH…TSYPSLYEDA (200 aa)) folds into the MAGE domain.

As to expression, expressed in tumors of several types, such as melanoma, head and neck squamous cell carcinoma, lung carcinoma and breast carcinoma. Expressed in testis, ovary, prostate, cancerous prostate, breast and adrenal tissue.

It is found in the nucleus. It localises to the cytoplasm. Acts as androgen receptor coregulator that increases androgen receptor activity by modulating the receptors interdomain interaction. May play a role in embryonal development and tumor transformation or aspects of tumor progression. The chain is Melanoma-associated antigen 11 from Homo sapiens (Human).